A 283-amino-acid polypeptide reads, in one-letter code: Putative cytochrome b-c1 complex subunit Rieske-like protein 1 (283 aa).

The helical transmembrane segment at 116–149 threads the bilayer; sequence TEARKGFSYLVTGVTTVGVAYAAKNAVTQFVSSM. The Rieske domain occupies 196–281; the sequence is EAAVELSQLR…YEFTSDDMVI (86 aa). [2Fe-2S] cluster-binding residues include Cys226, His228, Cys245, and His248. An intrachain disulfide couples Cys231 to Cys247.

This sequence belongs to the Rieske iron-sulfur protein family. [2Fe-2S] cluster serves as cofactor.

The protein resides in the membrane. The chain is Putative cytochrome b-c1 complex subunit Rieske-like protein 1 (UQCRFS1P1) from Homo sapiens (Human).